Here is a 285-residue protein sequence, read N- to C-terminus: Sulfotransferase 2A1 (285 aa).

3'-phosphoadenylyl sulfate is bound by residues Lys44, Ser45, Gly46, Thr47, Asn48, and Trp49. The active-site Proton acceptor is His99. 3'-phosphoadenylyl sulfate contacts are provided by Arg121, Ser129, Tyr184, Ser218, Met223, Arg247, Lys248, and Gly249. Phosphoserine is present on Ser251.

The protein belongs to the sulfotransferase 1 family. In terms of assembly, homodimer. In terms of processing, the N-terminus is blocked. As to expression, liver, adrenal and at lower level in the kidney. Is present in human fetus in higher level in the adrenal than the liver and the kidney.

The protein resides in the cytoplasm. The catalysed reaction is an alcohol + 3'-phosphoadenylyl sulfate = an alkyl sulfate + adenosine 3',5'-bisphosphate + H(+). It catalyses the reaction (24S)-hydroxycholesterol + 3'-phosphoadenylyl sulfate = (24S)-hydroxycholesterol 24-sulfate + adenosine 3',5'-bisphosphate + H(+). It carries out the reaction (24S)-hydroxycholesterol + 3'-phosphoadenylyl sulfate = (24S)-hydroxycholesterol 3-sulfate + adenosine 3',5'-bisphosphate + H(+). The enzyme catalyses (24S)-hydroxycholesterol 24-sulfate + 3'-phosphoadenylyl sulfate = (24S)-hydroxycholesterol 3,24-disulfate + adenosine 3',5'-bisphosphate + H(+). The catalysed reaction is 3beta-hydroxyandrost-5-en-17-one + 3'-phosphoadenylyl sulfate = dehydroepiandrosterone 3-sulfate + adenosine 3',5'-bisphosphate + H(+). It catalyses the reaction pregnenolone + 3'-phosphoadenylyl sulfate = pregnenolone sulfate + adenosine 3',5'-bisphosphate + H(+). It carries out the reaction androsterone + 3'-phosphoadenylyl sulfate = androsterone 3alpha-sulfate + adenosine 3',5'-bisphosphate + H(+). The enzyme catalyses taurolithocholate + 3'-phosphoadenylyl sulfate = taurolithocholate 3-sulfate + adenosine 3',5'-bisphosphate + H(+). The catalysed reaction is lithocholate + 3'-phosphoadenylyl sulfate = lithocholate sulfate + adenosine 3',5'-bisphosphate + H(+). Subject to substrate inhibition. Alternate orientations for binding of steroid substrates to SULT2A1 may play a role in substrate inhibition. In terms of biological role, sulfotransferase that utilizes 3'-phospho-5'-adenylyl sulfate (PAPS) as sulfonate donor to catalyze the sulfonation of steroids and bile acids in the liver and adrenal glands. Mediates the sulfation of a wide range of steroids and sterols, including pregnenolone, androsterone, DHEA, bile acids, cholesterol and as well many xenobiotics that contain alcohol and phenol functional groups. Sulfonation increases the water solubility of most compounds, and therefore their renal excretion, but it can also result in bioactivation to form active metabolites. Plays an important role in maintening steroid and lipid homeostasis. Plays a key role in bile acid metabolism. In addition, catalyzes the metabolic activation of potent carcinogenic polycyclic arylmethanols. The sequence is that of Sulfotransferase 2A1 (SULT2A1) from Homo sapiens (Human).